The following is a 563-amino-acid chain: Mitochondrial distribution and morphology protein 34 (563 aa).

The SMP-LTD domain maps to 1–195; it reads MAFNFNWSPL…LPAIIHRLSL (195 aa). 2 disordered regions span residues 298-499 and 531-563; these read ERGD…PHTP and ARRQ…PKAL. Polar residues-rich tracts occupy residues 303–332 and 346–357; these read AGTT…FSNR and SLVNMNSATTGL. Positions 365–383 are enriched in basic residues; sequence SRSHPTRKKKNRVVNLRKP. A compositionally biased stretch (low complexity) spans 386-407; that stretch reads TESSESGESETASTTAVSEPTV. Polar residues-rich tracts occupy residues 458 to 471 and 478 to 488; these read PSLT…INTQ and YNQSASTSYTP. The segment covering 531-540 has biased composition (basic and acidic residues); sequence ARRQHDDKTA.

It belongs to the MDM34 family. In terms of assembly, component of the ER-mitochondria encounter structure (ERMES) or MDM complex, composed of MMM1, MDM10, MDM12 and MDM34.

The protein localises to the mitochondrion outer membrane. Component of the ERMES/MDM complex, which serves as a molecular tether to connect the endoplasmic reticulum (ER) and mitochondria. Components of this complex are involved in the control of mitochondrial shape and protein biogenesis, and function in nonvesicular lipid trafficking between the ER and mitochondria. MDM34 is required for the interaction of the ER-resident membrane protein MMM1 and the outer mitochondrial membrane-resident beta-barrel protein MDM10. The chain is Mitochondrial distribution and morphology protein 34 from Botryotinia fuckeliana (strain B05.10) (Noble rot fungus).